Here is a 142-residue protein sequence, read N- to C-terminus: Required for drug-induced death protein 1 (142 aa).

Disordered regions lie at residues 1-32 (MTVG…DEEA) and 46-66 (EAAA…TRGA). Residues 116-138 (VVIGLQGFAAAYSAPFAVATSVV) form a helical membrane-spanning segment.

It is found in the membrane. In terms of biological role, regulates drug efflux through modulation of ABCB1 localization and activity. In Homo sapiens (Human), this protein is Required for drug-induced death protein 1.